Reading from the N-terminus, the 487-residue chain is UDP-glycosyltransferase 72E1 (487 aa).

Residue H18 is the Proton acceptor of the active site. H18 contacts an anthocyanidin. Catalysis depends on D116, which acts as the Charge relay. Residues A351, Q353, H368, W371, N372, S373, and E376 each contribute to the UDP-alpha-D-glucose site. A391 contacts an anthocyanidin. Residues E392 and Q393 each contribute to the UDP-alpha-D-glucose site.

It belongs to the UDP-glycosyltransferase family. As to quaternary structure, interacts with SIS8. As to expression, expressed in seedlings, roots and leaves.

The protein resides in the nucleus. It carries out the reaction (E)-coniferaldehyde + UDP-alpha-D-glucose = 4-O-(beta-D-glucosyl)-4-(E)-coniferyl aldehyde + UDP + H(+). The catalysed reaction is (E)-sinapaldehyde + UDP-alpha-D-glucose = 4-O-(beta-D-glucosyl)-4-trans-sinapoyl aldehyde + UDP + H(+). In terms of biological role, UDP-glycosyltransferase that glucosylates coniferyl aldehyde to form coniferyl aldehyde 4-O-glucoside. Glucosylates sinapyl aldehyde to form sinapyl aldehyde 4-O-glucoside. Is not active in presence of coniferyl alcohol or sinapyl alcohol. Can glucosylate the phytotoxic xenobiotic compound 2,4,5-trichlorophenol (TCP). The chain is UDP-glycosyltransferase 72E1 from Arabidopsis thaliana (Mouse-ear cress).